We begin with the raw amino-acid sequence, 132 residues long: D-ribose pyranase (132 aa).

The active-site Proton donor is histidine 20. Substrate is bound by residues aspartate 28, histidine 99, and 121–123 (YSN).

This sequence belongs to the RbsD / FucU family. RbsD subfamily. In terms of assembly, homodecamer.

The protein resides in the cytoplasm. It catalyses the reaction beta-D-ribopyranose = beta-D-ribofuranose. It functions in the pathway carbohydrate metabolism; D-ribose degradation; D-ribose 5-phosphate from beta-D-ribopyranose: step 1/2. Its function is as follows. Catalyzes the interconversion of beta-pyran and beta-furan forms of D-ribose. In Pseudomonas putida (strain GB-1), this protein is D-ribose pyranase.